Consider the following 1420-residue polypeptide: Apolipoprotein(a) (1420 aa).

Residues Thr19–Pro30 are compositionally biased toward low complexity. The tract at residues Thr19 to Gly46 is disordered. 5 Kringle domains span residues Glu49–Cys127, Glu163–Cys241, Glu277–Cys355, Glu391–Cys469, and Glu505–Cys583. 15 disulfide bridges follow: Cys50–Cys127, Cys71–Cys110, Cys99–Cys122, Cys164–Cys241, Cys185–Cys224, Cys213–Cys236, Cys278–Cys355, Cys299–Cys338, Cys327–Cys350, Cys392–Cys469, Cys413–Cys452, Cys441–Cys464, Cys506–Cys583, Cys527–Cys566, and Cys555–Cys578. The interval Pro598 to Val617 is disordered. The span at Pro600 to Glu616 shows a compositional bias: polar residues. Kringle domains lie at Asp619 to Cys697, Asp725 to Cys803, Asp839 to Cys917, Asp953 to Cys1031, and Gln1067 to Cys1145. 19 disulfides stabilise this stretch: Cys620–Cys697, Cys641–Cys680, Cys669–Cys692, Cys726–Cys803, Cys747–Cys786, Cys775–Cys798, Cys840–Cys917, Cys861–Cys900, Cys889–Cys912, Cys954–Cys1031, Cys975–Cys1014, Cys1003–Cys1026, Cys1068–Cys1145, Cys1089–Cys1128, Cys1117–Cys1140, Cys1217–Cys1233, Cys1309–Cys1376, Cys1339–Cys1355, and Cys1366–Cys1394. The Peptidase S1 domain occupies Ile1191 to Arg1418.

It belongs to the peptidase S1 family. Plasminogen subfamily. In terms of assembly, disulfide-linked to apo-B100. Binds to fibronectin and decorin. Post-translationally, N- and O-glycosylated.

Functionally, apo(a) is the main constituent of lipoprotein(a) (Lp(a)). It has serine proteinase activity and is able of autoproteolysis. Inhibits tissue-type plasminogen activator 1. Lp(a) may be a ligand for megalin/Gp 330. The chain is Apolipoprotein(a) (LPA) from Macaca mulatta (Rhesus macaque).